The primary structure comprises 1131 residues: Phytochrome A (1131 aa).

A disordered region spans residues 1 to 23 (MSSSRPAHSSSSSSRTRQSSRAR). The GAF domain maps to 219 to 404 (SMEALCNTVV…VFAVHVNKEF (186 aa)). Position 324 (cysteine 324) interacts with phytochromobilin. PAS domains are found at residues 620–690 (VTSE…LQGR) and 750–834 (VEGD…LAGE). Positions 904-1124 (YMRHAINKPL…TFILTAELAA (221 aa)) constitute a Histidine kinase domain.

Belongs to the phytochrome family. Homodimer. Post-translationally, contains one covalently linked phytochromobilin chromophore.

In terms of biological role, regulatory photoreceptor which exists in two forms that are reversibly interconvertible by light: the Pr form that absorbs maximally in the red region of the spectrum and the Pfr form that absorbs maximally in the far-red region. Photoconversion of Pr to Pfr induces an array of morphogenic responses, whereas reconversion of Pfr to Pr cancels the induction of those responses. Pfr controls the expression of a number of nuclear genes including those encoding the small subunit of ribulose-bisphosphate carboxylase, chlorophyll A/B binding protein, protochlorophyllide reductase, rRNA, etc. It also controls the expression of its own gene(s) in a negative feedback fashion. The chain is Phytochrome A (PHYA1) from Zea mays (Maize).